A 199-amino-acid polypeptide reads, in one-letter code: Thioredoxin peroxidase (199 aa).

In terms of domain architecture, Thioredoxin spans 6-165; the sequence is AKLNHPAPHF…TLRLVKAFQF (160 aa). Cys-52 functions as the Cysteine sulfenic acid (-SOH) intermediate in the catalytic mechanism. A disordered region spans residues 179–199; that stretch reads PGSKTMKADPNGSQDYFSSMN. Residues 189 to 199 are compositionally biased toward polar residues; the sequence is NGSQDYFSSMN.

Belongs to the peroxiredoxin family. AhpC/Prx1 subfamily. Homodimer; disulfide-linked, upon oxidation.

It catalyses the reaction a hydroperoxide + [thioredoxin]-dithiol = an alcohol + [thioredoxin]-disulfide + H2O. Functionally, thiol-specific peroxidase that catalyzes the reduction of hydrogen peroxide and organic hydroperoxides to water and alcohols, respectively. Plays a role in cell protection against oxidative stress by detoxifying peroxides and as sensor of hydrogen peroxide-mediated signaling events. In Trypanosoma brucei rhodesiense, this protein is Thioredoxin peroxidase.